Reading from the N-terminus, the 724-residue chain is Catalase-peroxidase (724 aa).

The segment at residues 98-226 is a cross-link (tryptophyl-tyrosyl-methioninium (Trp-Tyr) (with M-252)); it reads WHAAGTYRIA…LAAVMMGLIY (129 aa). His99 (proton acceptor) is an active-site residue. The segment at residues 226-252 is a cross-link (tryptophyl-tyrosyl-methioninium (Tyr-Met) (with W-98)); sequence YVNPEGVDGNPDPLKTAHDIRVTFERM. Residue His267 participates in heme b binding.

It belongs to the peroxidase family. Peroxidase/catalase subfamily. Homodimer or homotetramer. Heme b serves as cofactor. Post-translationally, formation of the three residue Trp-Tyr-Met cross-link is important for the catalase, but not the peroxidase activity of the enzyme.

The catalysed reaction is H2O2 + AH2 = A + 2 H2O. The enzyme catalyses 2 H2O2 = O2 + 2 H2O. Its function is as follows. Bifunctional enzyme with both catalase and broad-spectrum peroxidase activity. In Psychromonas ingrahamii (strain DSM 17664 / CCUG 51855 / 37), this protein is Catalase-peroxidase.